The primary structure comprises 947 residues: Serine/threonine-protein kinase PKH2 (947 aa).

Residues 1-14 (MHKFRYSLHQHYSK) are compositionally biased toward basic residues. Disordered stretches follow at residues 1–43 (MHKF…SSSS), 108–132 (SLGN…LSSH), and 162–212 (FNHL…NEEN). The segment covering 108-117 (SLGNTTNETG) has biased composition (polar residues). The span at 187–198 (NTEEEENNDDTD) shows a compositional bias: acidic residues. Basic and acidic residues predominate over residues 199–212 (EIPKSETLKQNEEN). The 263-residue stretch at 240–502 (FKFGKELGEG…IPEIQKHYFF (263 aa)) folds into the Protein kinase domain. ATP contacts are provided by residues 250-252 (SYS) and K269. Residues 271–316 (LDKRHIIKEKKVKYVNIEKHALNRLSNRLGVISLYFTFQDKDSLYF) form a PIF-pocket region. Residues 319–321 (DYA) and E325 each bind ATP. The active-site Proton acceptor is the D364. The ATP site is built by E368 and D382. Composition is skewed to low complexity over residues 550–579 (VKKS…KGSS) and 618–632 (SSTS…SNSN). Disordered regions lie at residues 550–598 (VKKS…STEK), 611–644 (KPAT…QQDY), 660–686 (SVGS…IHQQ), and 794–816 (NMKR…ASTS). Positions 802 to 811 (DSKKSMDIER) are enriched in basic and acidic residues.

The protein belongs to the protein kinase superfamily. AGC Ser/Thr protein kinase family. PDPK1 subfamily.

The protein localises to the nucleus. It localises to the cytoplasm. Its subcellular location is the cell cortex. It carries out the reaction L-seryl-[protein] + ATP = O-phospho-L-seryl-[protein] + ADP + H(+). It catalyses the reaction L-threonyl-[protein] + ATP = O-phospho-L-threonyl-[protein] + ADP + H(+). Serine/threonine-protein kinase which is part sphingolipid-mediated signaling pathway that is required for the internalization step of endocytosis by regulating eisosome assembly and organization, and modulating the organization of the plasma membrane. Phosphorylates and activates PKC1. Activates YPK1 and YPK2, 2 components of signaling cascade required for maintenance of cell wall integrity. Required for stress-induced P-body assembly and regulates global mRNA decay at the deadenylation step. The sequence is that of Serine/threonine-protein kinase PKH2 from Candida albicans (strain SC5314 / ATCC MYA-2876) (Yeast).